The sequence spans 225 residues: NAD(P)H-quinone oxidoreductase subunit K, chloroplastic (225 aa).

4 residues coordinate [4Fe-4S] cluster: cysteine 43, cysteine 44, cysteine 108, and cysteine 139.

The protein belongs to the complex I 20 kDa subunit family. NDH is composed of at least 16 different subunits, 5 of which are encoded in the nucleus. [4Fe-4S] cluster is required as a cofactor.

It localises to the plastid. It is found in the chloroplast thylakoid membrane. The catalysed reaction is a plastoquinone + NADH + (n+1) H(+)(in) = a plastoquinol + NAD(+) + n H(+)(out). The enzyme catalyses a plastoquinone + NADPH + (n+1) H(+)(in) = a plastoquinol + NADP(+) + n H(+)(out). Functionally, NDH shuttles electrons from NAD(P)H:plastoquinone, via FMN and iron-sulfur (Fe-S) centers, to quinones in the photosynthetic chain and possibly in a chloroplast respiratory chain. The immediate electron acceptor for the enzyme in this species is believed to be plastoquinone. Couples the redox reaction to proton translocation, and thus conserves the redox energy in a proton gradient. In Guizotia abyssinica (Niger), this protein is NAD(P)H-quinone oxidoreductase subunit K, chloroplastic.